A 117-amino-acid polypeptide reads, in one-letter code: Large ribosomal subunit protein bL20 (117 aa).

Belongs to the bacterial ribosomal protein bL20 family.

Functionally, binds directly to 23S ribosomal RNA and is necessary for the in vitro assembly process of the 50S ribosomal subunit. It is not involved in the protein synthesizing functions of that subunit. This chain is Large ribosomal subunit protein bL20, found in Campylobacter jejuni subsp. jejuni serotype O:6 (strain 81116 / NCTC 11828).